The chain runs to 87 residues: MSSTFEQAAADVKELKETPNSDELLKLYALFKQATVGDNNTEKPGLLDLKGKFKWNAWEELKGKSKEDAASEYISFVDELKTKYGMK.

Positions 1–86 (MSSTFEQAAA…VDELKTKYGM (86 aa)) constitute an ACB domain. An acyl-CoA is bound by residues Lys-13, 28-32 (YALFK), Lys-50, Lys-54, and Tyr-73.

This sequence belongs to the ACBP family.

The protein resides in the cytoplasm. Its subcellular location is the nucleus. Functionally, binds medium- and long-chain acyl-CoA esters with very high affinity and may function as an intracellular carrier of acyl-CoA esters. May enhance the activity of the ceramide synthase complex. The sequence is that of Putative acyl-CoA-binding protein from Schizosaccharomyces pombe (strain 972 / ATCC 24843) (Fission yeast).